The primary structure comprises 435 residues: ATP-dependent protease ATPase subunit HslU (435 aa).

ATP-binding positions include I18, 60-65, D248, E313, and R385; that span reads GVGKTE.

It belongs to the ClpX chaperone family. HslU subfamily. In terms of assembly, a double ring-shaped homohexamer of HslV is capped on each side by a ring-shaped HslU homohexamer. The assembly of the HslU/HslV complex is dependent on binding of ATP.

It localises to the cytoplasm. Functionally, ATPase subunit of a proteasome-like degradation complex; this subunit has chaperone activity. The binding of ATP and its subsequent hydrolysis by HslU are essential for unfolding of protein substrates subsequently hydrolyzed by HslV. HslU recognizes the N-terminal part of its protein substrates and unfolds these before they are guided to HslV for hydrolysis. This Roseobacter denitrificans (strain ATCC 33942 / OCh 114) (Erythrobacter sp. (strain OCh 114)) protein is ATP-dependent protease ATPase subunit HslU.